The sequence spans 199 residues: Oligoribonuclease (199 aa).

The region spanning 5–170 is the Exonuclease domain; the sequence is LVWIDCEMTG…ADIRESIREL (166 aa). Tyr127 is an active-site residue.

This sequence belongs to the oligoribonuclease family.

The protein resides in the cytoplasm. In terms of biological role, 3'-to-5' exoribonuclease specific for small oligoribonucleotides. The protein is Oligoribonuclease of Rhodococcus jostii (strain RHA1).